A 1544-amino-acid polypeptide reads, in one-letter code: Transcriptional activator GLI3 (1544 aa).

2 stretches are compositionally biased toward polar residues: residues methionine 1 to threonine 10 and asparagine 402 to glycine 429. Disordered regions lie at residues methionine 1 to alanine 83 and serine 373 to glutamate 477. Over residues valine 463–proline 476 the composition is skewed to basic and acidic residues. A C2H2-type 1 zinc finger spans residues threonine 482–histidine 509. Residues leucine 520 to histidine 542 form a C2H2-type 2; degenerate zinc finger. 3 consecutive C2H2-type zinc fingers follow at residues histidine 548–histidine 572, tyrosine 578–histidine 603, and tyrosine 609–histidine 634. Disordered stretches follow at residues aspartate 622–asparagine 728, arginine 865–serine 919, serine 1126–serine 1155, and histidine 1327–serine 1368. A compositionally biased stretch (basic and acidic residues) spans histidine 634–proline 650. A compositionally biased stretch (polar residues) spans serine 660 to threonine 685. The segment covering serine 686–lysine 701 has biased composition (basic and acidic residues). Over residues proline 702–asparagine 728 the composition is skewed to polar residues. Positions arginine 865–serine 882 are enriched in low complexity. The segment covering glycine 1330 to glutamine 1355 has biased composition (polar residues).

This sequence belongs to the GLI C2H2-type zinc-finger protein family. Phosphorylation is essential for its proteolytic processing. Post-translationally, the repressor form (GLI3R), a C-terminally truncated form is generated from the full-length GLI3 protein (GLI3FL) through proteolytic processing.

Its subcellular location is the nucleus. It localises to the cytoplasm. Functionally, has a dual function as a transcriptional activator and a repressor of the sonic hedgehog (Shh) pathway, and plays a role in limb development. The full-length GLI3 form (GLI3FL) acts as an activator (GLI3A) while GLI3R, its C-terminally truncated form, acts as a repressor. This Gallus gallus (Chicken) protein is Transcriptional activator GLI3 (GLI3).